A 78-amino-acid polypeptide reads, in one-letter code: MSRVCQVTGKRPITGNNVSHSKRRTKRRFLPNLHWHRFWVEGENRYIRLRVSSKGMRIIDKKGIESVLAEIRANGEKV.

Residues 1 to 23 (MSRVCQVTGKRPITGNNVSHSKR) are disordered.

It belongs to the bacterial ribosomal protein bL28 family.

This chain is Large ribosomal subunit protein bL28, found in Marinomonas sp. (strain MWYL1).